The chain runs to 226 residues: Cytidylate kinase (226 aa).

Residue Gly11 to Thr19 coordinates ATP.

It belongs to the cytidylate kinase family. Type 1 subfamily.

Its subcellular location is the cytoplasm. It catalyses the reaction CMP + ATP = CDP + ADP. The catalysed reaction is dCMP + ATP = dCDP + ADP. This is Cytidylate kinase from Bacillus licheniformis (strain ATCC 14580 / DSM 13 / JCM 2505 / CCUG 7422 / NBRC 12200 / NCIMB 9375 / NCTC 10341 / NRRL NRS-1264 / Gibson 46).